The primary structure comprises 187 residues: Large ribosomal subunit protein uL6 (187 aa).

Belongs to the universal ribosomal protein uL6 family. In terms of assembly, part of the 50S ribosomal subunit.

This protein binds to the 23S rRNA, and is important in its secondary structure. It is located near the subunit interface in the base of the L7/L12 stalk, and near the tRNA binding site of the peptidyltransferase center. This Roseiflexus castenholzii (strain DSM 13941 / HLO8) protein is Large ribosomal subunit protein uL6.